We begin with the raw amino-acid sequence, 477 residues long: Cysteine--tRNA ligase (477 aa).

Cys29 lines the Zn(2+) pocket. The short motif at 31 to 41 is the 'HIGH' region element; it reads PTVYDYPHLGH. Residues Cys209, His234, and Glu238 each contribute to the Zn(2+) site. The 'KMSKS' region motif lies at 266 to 270; the sequence is KMSKS. Lys269 contacts ATP.

The protein belongs to the class-I aminoacyl-tRNA synthetase family. It depends on Zn(2+) as a cofactor.

It localises to the cytoplasm. The enzyme catalyses tRNA(Cys) + L-cysteine + ATP = L-cysteinyl-tRNA(Cys) + AMP + diphosphate. The sequence is that of Cysteine--tRNA ligase (cysS) from Pyrococcus abyssi (strain GE5 / Orsay).